The chain runs to 130 residues: Peptidyl-prolyl cis-trans isomerase pin4 (130 aa).

The tract at residues 1-38 (MGKDKKASGSGSGSKGGKDAGNKDAGKDAGKASKGAQS) is disordered. Residues 16–31 (GGKDAGNKDAGKDAGK) show a composition bias toward basic and acidic residues. One can recognise a PpiC domain in the interval 36–128 (AQSINVRHIL…FGYHIIMVEG (93 aa)).

It belongs to the PpiC/parvulin rotamase family. PIN4 subfamily.

It carries out the reaction [protein]-peptidylproline (omega=180) = [protein]-peptidylproline (omega=0). In terms of biological role, PPIases accelerate the folding of proteins. It catalyzes the cis-trans isomerization of proline imidic peptide bonds in oligopeptides. This Neurospora crassa (strain ATCC 24698 / 74-OR23-1A / CBS 708.71 / DSM 1257 / FGSC 987) protein is Peptidyl-prolyl cis-trans isomerase pin4 (ppi-5).